A 287-amino-acid polypeptide reads, in one-letter code: 4-hydroxybenzoate octaprenyltransferase (287 aa).

A run of 7 helical transmembrane segments spans residues 23–40 (IGSLLLLWPTLWALWLAG), 99–119 (LFVVLVLLAFGLVLTLNTMTI), 141–161 (LPQFVLGAAFGWSIPMAYAAV), 163–183 (ESLPATCWMMFLAYICWTVAY), 213–233 (LIIGLLQFSMLALLLILGTMT), 235–255 (LGMPYYISLLVAGGMFIYQQI), and 266–286 (FKAFHNNKYAGMAIFIGVLFG).

The protein belongs to the UbiA prenyltransferase family. It depends on Mg(2+) as a cofactor.

The protein localises to the cell inner membrane. It carries out the reaction all-trans-octaprenyl diphosphate + 4-hydroxybenzoate = 4-hydroxy-3-(all-trans-octaprenyl)benzoate + diphosphate. It participates in cofactor biosynthesis; ubiquinone biosynthesis. Its function is as follows. Catalyzes the prenylation of para-hydroxybenzoate (PHB) with an all-trans polyprenyl group. Mediates the second step in the final reaction sequence of ubiquinone-8 (UQ-8) biosynthesis, which is the condensation of the polyisoprenoid side chain with PHB, generating the first membrane-bound Q intermediate 3-octaprenyl-4-hydroxybenzoate. The chain is 4-hydroxybenzoate octaprenyltransferase from Pectobacterium carotovorum subsp. carotovorum (strain PC1).